Reading from the N-terminus, the 205-residue chain is Troponin I, cardiac muscle (205 aa).

The disordered stretch occupies residues 1–38; the sequence is MADQSGNAAPPPVRRRSSANYRAYATEPHAKKKSKISA. Ala-2 carries the post-translational modification N-acetylalanine. At Ser-5 the chain carries Phosphoserine. 2 positions are modified to phosphoserine; by PKA and PKD/PRKD1: Ser-17 and Ser-18. Position 21 is a phosphotyrosine (Tyr-21). The residue at position 26 (Thr-26) is a Phosphothreonine; by STK4/MST1. The involved in binding TNC stretch occupies residues 27-74; sequence EPHAKKKSKISASRKLQLKTLMLQIAKQELEREAVERRGEKGRALSTR. Phosphoserine; by PKC/PRKCE occurs at positions 37 and 39. Thr-46 is modified (phosphothreonine; by STK4/MST1). Position 72 is a phosphoserine (Ser-72). The residue at position 73 (Thr-73) is a Phosphothreonine. Residues 124-145 are involved in binding TNC and actin; sequence NQKIFDLRGKFKRPTLRRVRIS. Position 138 is a phosphothreonine; by STK4/MST1 (Thr-138). Ser-145 is modified (phosphoserine; by PAK3). The residue at position 176 (Thr-176) is a Phosphothreonine. Phosphoserine is present on Ser-194.

Belongs to the troponin I family. Binds to actin and tropomyosin. Interacts with TRIM63. Interacts with STK4/MST1. Phosphorylated at Ser-17 and Ser-18 by PRKD1; phosphorylation reduces myofilament calcium sensitivity. Phosphorylated preferentially at Thr-26. Phosphorylation by STK4/MST1 alters its binding affinity to TNNC1 (cardiac Tn-C) and TNNT2 (cardiac Tn-T). Phosphorylated at Ser-37 and Ser-39 by PRKCE; phosphorylation increases myocardium contractile dysfunction.

Troponin I is the inhibitory subunit of troponin, the thin filament regulatory complex which confers calcium-sensitivity to striated muscle actomyosin ATPase activity. The protein is Troponin I, cardiac muscle (TNNI3) of Equus caballus (Horse).